Reading from the N-terminus, the 299-residue chain is ATP phosphoribosyltransferase (299 aa).

It belongs to the ATP phosphoribosyltransferase family. Long subfamily. In terms of assembly, equilibrium between an active dimeric form, an inactive hexameric form and higher aggregates. Interconversion between the various forms is largely reversible and is influenced by the natural substrates and inhibitors of the enzyme. It depends on Mg(2+) as a cofactor.

It localises to the cytoplasm. It carries out the reaction 1-(5-phospho-beta-D-ribosyl)-ATP + diphosphate = 5-phospho-alpha-D-ribose 1-diphosphate + ATP. It participates in amino-acid biosynthesis; L-histidine biosynthesis; L-histidine from 5-phospho-alpha-D-ribose 1-diphosphate: step 1/9. Its activity is regulated as follows. Feedback inhibited by histidine. Catalyzes the condensation of ATP and 5-phosphoribose 1-diphosphate to form N'-(5'-phosphoribosyl)-ATP (PR-ATP). Has a crucial role in the pathway because the rate of histidine biosynthesis seems to be controlled primarily by regulation of HisG enzymatic activity. The sequence is that of ATP phosphoribosyltransferase from Edwardsiella ictaluri (strain 93-146).